The sequence spans 499 residues: Cobyric acid synthase (499 aa).

The 184-residue stretch at arginine 266 to tryptophan 449 folds into the GATase cobBQ-type domain. Catalysis depends on cysteine 344, which acts as the Nucleophile. Residue histidine 441 is part of the active site.

Belongs to the CobB/CobQ family. CobQ subfamily.

It participates in cofactor biosynthesis; adenosylcobalamin biosynthesis. Functionally, catalyzes amidations at positions B, D, E, and G on adenosylcobyrinic A,C-diamide. NH(2) groups are provided by glutamine, and one molecule of ATP is hydrogenolyzed for each amidation. This is Cobyric acid synthase from Synechococcus sp. (strain JA-2-3B'a(2-13)) (Cyanobacteria bacterium Yellowstone B-Prime).